The following is a 287-amino-acid chain: Large ribosomal subunit protein uL2 (287 aa).

A disordered region spans residues 221-287; sequence RGSVMNPCDH…SKRSRGGRDS (67 aa). Residues 258–287 are compositionally biased toward basic residues; sequence KTRKRNKPSNRYVLRKRRKTSKRSRGGRDS.

This sequence belongs to the universal ribosomal protein uL2 family. Part of the 50S ribosomal subunit. Forms a bridge to the 30S subunit in the 70S ribosome.

One of the primary rRNA binding proteins. Required for association of the 30S and 50S subunits to form the 70S ribosome, for tRNA binding and peptide bond formation. It has been suggested to have peptidyltransferase activity; this is somewhat controversial. Makes several contacts with the 16S rRNA in the 70S ribosome. The sequence is that of Large ribosomal subunit protein uL2 from Parasynechococcus marenigrum (strain WH8102).